The chain runs to 279 residues: Oxygen-dependent coproporphyrinogen-III oxidase (279 aa).

Position 102 (serine 102) interacts with substrate. Residues histidine 106 and histidine 116 each coordinate a divalent metal cation. Histidine 116 functions as the Proton donor in the catalytic mechanism. Asparagine 118 to arginine 120 is a substrate binding site. A divalent metal cation is bound by residues histidine 149 and histidine 179. The important for dimerization stretch occupies residues tyrosine 244 to asparagine 279.

This sequence belongs to the aerobic coproporphyrinogen-III oxidase family. As to quaternary structure, homodimer. A divalent metal cation serves as cofactor.

The protein resides in the cytoplasm. It carries out the reaction coproporphyrinogen III + O2 + 2 H(+) = protoporphyrinogen IX + 2 CO2 + 2 H2O. Its pathway is porphyrin-containing compound metabolism; protoporphyrin-IX biosynthesis; protoporphyrinogen-IX from coproporphyrinogen-III (O2 route): step 1/1. Involved in the heme biosynthesis. Catalyzes the aerobic oxidative decarboxylation of propionate groups of rings A and B of coproporphyrinogen-III to yield the vinyl groups in protoporphyrinogen-IX. The chain is Oxygen-dependent coproporphyrinogen-III oxidase from Rickettsia africae (strain ESF-5).